A 485-amino-acid chain; its full sequence is UDP-N-acetylmuramoyl-L-alanyl-D-glutamate--2,6-diaminopimelate ligase (485 aa).

UDP-N-acetyl-alpha-D-muramoyl-L-alanyl-D-glutamate contacts are provided by leucine 27 and serine 29. 106–112 (GTSGKTS) contacts ATP. UDP-N-acetyl-alpha-D-muramoyl-L-alanyl-D-glutamate is bound by residues 148–149 (TT), serine 175, glutamine 181, and arginine 183. Lysine 215 is modified (N6-carboxylysine). Meso-2,6-diaminopimelate-binding positions include arginine 382, 406–409 (DNPR), glycine 454, and glutamate 458. The short motif at 406–409 (DNPR) is the Meso-diaminopimelate recognition motif element.

This sequence belongs to the MurCDEF family. MurE subfamily. The cofactor is Mg(2+). Post-translationally, carboxylation is probably crucial for Mg(2+) binding and, consequently, for the gamma-phosphate positioning of ATP.

It localises to the cytoplasm. It carries out the reaction UDP-N-acetyl-alpha-D-muramoyl-L-alanyl-D-glutamate + meso-2,6-diaminopimelate + ATP = UDP-N-acetyl-alpha-D-muramoyl-L-alanyl-gamma-D-glutamyl-meso-2,6-diaminopimelate + ADP + phosphate + H(+). The protein operates within cell wall biogenesis; peptidoglycan biosynthesis. In terms of biological role, catalyzes the addition of meso-diaminopimelic acid to the nucleotide precursor UDP-N-acetylmuramoyl-L-alanyl-D-glutamate (UMAG) in the biosynthesis of bacterial cell-wall peptidoglycan. This Bradyrhizobium diazoefficiens (strain JCM 10833 / BCRC 13528 / IAM 13628 / NBRC 14792 / USDA 110) protein is UDP-N-acetylmuramoyl-L-alanyl-D-glutamate--2,6-diaminopimelate ligase.